Reading from the N-terminus, the 239-residue chain is Probable intron-encoded endonuclease I-ZbiI (239 aa).

This sequence belongs to the LAGLIDADG endonuclease family.

The protein resides in the mitochondrion. In terms of biological role, endonuclease involved in mitochondrial 21S rRNA gene intron homing. This is Probable intron-encoded endonuclease I-ZbiI from Zygosaccharomyces bisporus.